Consider the following 57-residue polypeptide: MAVPKRRMSRANTRMRRSQWKADNVALQEVKIDGQTVRIPRRLVKAAQLGLVDVEQF.

Belongs to the bacterial ribosomal protein bL32 family.

This is Large ribosomal subunit protein bL32 from Corynebacterium glutamicum (strain R).